Consider the following 282-residue polypeptide: U1 small nuclear ribonucleoprotein A (282 aa).

An N-acetylalanine modification is found at Ala-2. The 80-residue stretch at 10–89 (HTIYINNLNE…KPMRIQYAKT (80 aa)) folds into the RRM 1 domain. N6-acetyllysine is present on Lys-60. The segment at 101 to 141 (FVERDRKREKRKPKSQETPAAKKAVQGGAAAPVVGTVQGPV) is disordered. The span at 119–141 (PAAKKAVQGGAAAPVVGTVQGPV) shows a compositional bias: low complexity. Arg-152 is modified (omega-N-methylarginine). The 75-residue stretch at 208–282 (HILFLTNLPE…NAMKISFAKK (75 aa)) folds into the RRM 2 domain.

Belongs to the RRM U1 A/B'' family. As to quaternary structure, U1 snRNP is composed of the 7 core Sm proteins SNRPB, SNRPD1, SNRPD2, SNRPD3, SNRPE, SNRPF and SNRPG that assemble in a heptameric protein ring on the Sm site of the small nuclear RNA to form the core snRNP, and at least three U1 snRNP-specific proteins SNRNP70/U1-70K, SNRPA/U1-A and SNRPC/U1-C. Interacts with SFPQ; component of a snRNP-free complex with SFPQ.

The protein resides in the nucleus. In terms of biological role, component of the spliceosomal U1 snRNP, which is essential for recognition of the pre-mRNA 5' splice-site and the subsequent assembly of the spliceosome. U1 snRNP is the first snRNP to interact with pre-mRNA. This interaction is required for the subsequent binding of U2 snRNP and the U4/U6/U5 tri-snRNP. SNRPA binds stem loop II of U1 snRNA. In a snRNP-free form (SF-A) may be involved in coupled pre-mRNA splicing and polyadenylation process. May bind preferentially to the 5'-UGCAC-3' motif on RNAs. The sequence is that of U1 small nuclear ribonucleoprotein A (SNRPA) from Bos taurus (Bovine).